Here is a 261-residue protein sequence, read N- to C-terminus: Indole-3-glycerol phosphate synthase (261 aa).

It belongs to the TrpC family.

The enzyme catalyses 1-(2-carboxyphenylamino)-1-deoxy-D-ribulose 5-phosphate + H(+) = (1S,2R)-1-C-(indol-3-yl)glycerol 3-phosphate + CO2 + H2O. Its pathway is amino-acid biosynthesis; L-tryptophan biosynthesis; L-tryptophan from chorismate: step 4/5. The polypeptide is Indole-3-glycerol phosphate synthase (Burkholderia lata (strain ATCC 17760 / DSM 23089 / LMG 22485 / NCIMB 9086 / R18194 / 383)).